A 70-amino-acid polypeptide reads, in one-letter code: ATP synthase subunit c (70 aa).

Helical transmembrane passes span 5-25 (AAGI…AIIV) and 47-67 (FIGV…SFIL).

It belongs to the ATPase C chain family. F-type ATPases have 2 components, F(1) - the catalytic core - and F(0) - the membrane proton channel. F(1) has five subunits: alpha(3), beta(3), gamma(1), delta(1), epsilon(1). F(0) has three main subunits: a(1), b(2) and c(10-14). The alpha and beta chains form an alternating ring which encloses part of the gamma chain. F(1) is attached to F(0) by a central stalk formed by the gamma and epsilon chains, while a peripheral stalk is formed by the delta and b chains.

It localises to the cell membrane. In terms of biological role, f(1)F(0) ATP synthase produces ATP from ADP in the presence of a proton or sodium gradient. F-type ATPases consist of two structural domains, F(1) containing the extramembraneous catalytic core and F(0) containing the membrane proton channel, linked together by a central stalk and a peripheral stalk. During catalysis, ATP synthesis in the catalytic domain of F(1) is coupled via a rotary mechanism of the central stalk subunits to proton translocation. Its function is as follows. Key component of the F(0) channel; it plays a direct role in translocation across the membrane. A homomeric c-ring of between 10-14 subunits forms the central stalk rotor element with the F(1) delta and epsilon subunits. The protein is ATP synthase subunit c of Halalkalibacterium halodurans (strain ATCC BAA-125 / DSM 18197 / FERM 7344 / JCM 9153 / C-125) (Bacillus halodurans).